The following is a 194-amino-acid chain: NADH-quinone oxidoreductase subunit B 1 (194 aa).

Over residues 1–12 (MGVTPVSNQPLV) the composition is skewed to polar residues. The interval 1 to 23 (MGVTPVSNQPLVAQQPKGIIDPS) is disordered. Cys73, Cys74, Cys138, and Cys168 together coordinate [4Fe-4S] cluster.

It belongs to the complex I 20 kDa subunit family. NDH-1 is composed of 14 different subunits. Subunits NuoB, C, D, E, F, and G constitute the peripheral sector of the complex. [4Fe-4S] cluster is required as a cofactor.

The protein resides in the cell inner membrane. The enzyme catalyses a quinone + NADH + 5 H(+)(in) = a quinol + NAD(+) + 4 H(+)(out). In terms of biological role, NDH-1 shuttles electrons from NADH, via FMN and iron-sulfur (Fe-S) centers, to quinones in the respiratory chain. The immediate electron acceptor for the enzyme in this species is believed to be ubiquinone. Couples the redox reaction to proton translocation (for every two electrons transferred, four hydrogen ions are translocated across the cytoplasmic membrane), and thus conserves the redox energy in a proton gradient. The chain is NADH-quinone oxidoreductase subunit B 1 from Rhizobium etli (strain ATCC 51251 / DSM 11541 / JCM 21823 / NBRC 15573 / CFN 42).